The primary structure comprises 98 residues: NADH-ubiquinone oxidoreductase chain 4L (98 aa).

3 consecutive transmembrane segments (helical) span residues 2-22 (TPIF…TLIF), 29-49 (SLLC…LIIL), and 61-81 (ILLL…LVMV).

It belongs to the complex I subunit 4L family. As to quaternary structure, core subunit of respiratory chain NADH dehydrogenase (Complex I) which is composed of 45 different subunits.

The protein localises to the mitochondrion inner membrane. It carries out the reaction a ubiquinone + NADH + 5 H(+)(in) = a ubiquinol + NAD(+) + 4 H(+)(out). Its function is as follows. Core subunit of the mitochondrial membrane respiratory chain NADH dehydrogenase (Complex I) which catalyzes electron transfer from NADH through the respiratory chain, using ubiquinone as an electron acceptor. Part of the enzyme membrane arm which is embedded in the lipid bilayer and involved in proton translocation. The polypeptide is NADH-ubiquinone oxidoreductase chain 4L (MT-ND4L) (Avahi cleesei (Cleese's woolly lemur)).